The chain runs to 428 residues: Trigger factor (428 aa).

Residues 163–248 (GDIVDIDFEG…VNDVKVKELP (86 aa)) form the PPIase FKBP-type domain.

The protein belongs to the FKBP-type PPIase family. Tig subfamily.

The protein localises to the cytoplasm. The enzyme catalyses [protein]-peptidylproline (omega=180) = [protein]-peptidylproline (omega=0). Its function is as follows. Involved in protein export. Acts as a chaperone by maintaining the newly synthesized protein in an open conformation. Functions as a peptidyl-prolyl cis-trans isomerase. The polypeptide is Trigger factor (Acetivibrio thermocellus (strain ATCC 27405 / DSM 1237 / JCM 9322 / NBRC 103400 / NCIMB 10682 / NRRL B-4536 / VPI 7372) (Clostridium thermocellum)).